Reading from the N-terminus, the 464-residue chain is Chromosomal replication initiator protein DnaA (464 aa).

Residues 1 to 82 (MSLSLWQQCL…LLRFEVGSKP (82 aa)) are domain I, interacts with DnaA modulators. Residues 82-127 (PITQVISQTVTASVSSAPAAPAARTAAPSRPSWDNAAAQPELSYRS) are domain II. A compositionally biased stretch (low complexity) spans 98-113 (APAAPAARTAAPSRPS). A disordered region spans residues 98-117 (APAAPAARTAAPSRPSWDNA). The tract at residues 128–344 (NVNPKHTFDN…GALNRVIANA (217 aa)) is domain III, AAA+ region. ATP-binding residues include Gly-172, Gly-174, Lys-175, and Thr-176. The tract at residues 345–464 (NFTGRAITID…FSNLIRTLSS (120 aa)) is domain IV, binds dsDNA.

This sequence belongs to the DnaA family. In terms of assembly, oligomerizes as a right-handed, spiral filament on DNA at oriC.

Its subcellular location is the cytoplasm. Its function is as follows. Plays an important role in the initiation and regulation of chromosomal replication. Binds to the origin of replication; it binds specifically double-stranded DNA at a 9 bp consensus (dnaA box): 5'-TTATC[CA]A[CA]A-3'. DnaA binds to ATP and to acidic phospholipids. DnaA can inhibit its own gene expression as well as that of other genes. In terms of biological role, plays an essential role in the initiation and regulation of chromosomal replication. ATP-DnaA binds to the origin of replication (oriC) to initiate formation of the DNA replication initiation complex once per cell cycle. Binds the DnaA box (a 9 base pair repeat at the origin) and separates the double-stranded (ds)DNA. Forms a right-handed helical filament on oriC DNA; dsDNA binds to the exterior of the filament while single-stranded (ss)DNA is stabiized in the filament's interior. The ATP-DnaA-oriC complex binds and stabilizes one strand of the AT-rich DNA unwinding element (DUE), permitting loading of DNA polymerase. After initiation quickly degrades to an ADP-DnaA complex that is not apt for DNA replication. Binds acidic phospholipids. The protein is Chromosomal replication initiator protein DnaA of Serratia marcescens.